Reading from the N-terminus, the 336-residue chain is Zinc finger protein GFI1 homolog pag-3 (336 aa).

5 consecutive C2H2-type zinc fingers follow at residues 126–148, 154–176, 182–204, 210–232, and 238–260; these read FHCQ…QQVH, FECK…LLIH, YPCE…TYIH, HKCT…TRKH, and FACD…RESH. The segment at 253-290 is disordered; that stretch reads RRRHRESHHPGHPEECVSASQISSDLSPKGYMTPPTSN.

May interact with transcription factor unc-3. Expressed in the BDU neurons, the touch neurons, the VA, VB and VC motor neurons, two AVF interneurons and unidentified neurons of the retrovesicular ganglion (at protein level).

The protein localises to the nucleus. Its subcellular location is the cell projection. It is found in the axon. It localises to the perikaryon. Functionally, transcription factor. Plays a role in the determination of neuroblast cell fate and neuronal differentiation. Negatively modulates expression of several components of dense-core vesicles (DCVs), thereby, in a DCV membrane protein ida-1-dependent manner, regulating neurosecretion. Negatively modulates the transcription of its own gene, the mechanosensory gene mec-3, and also other touch neuron-specific genes in the BDU neurons; required for coordinated movement. Required to determine the identity of BDU sensory neurons in concert with transcription factor unc-86, regulating expression of a number of genes, including transcription factors ceh-14 and ahr-1, neuropeptides flp-10, nlp-1 and nlp-15, and tyramine receptor-encoding ser-2. Acts in concert with non-canonical WNT signaling to negatively modulate transcription of mec-3 gene in BDU neurons. May act in concert with transcription factor unc-3 in motor neuron fate determination. May play a role programmed cell death. The chain is Zinc finger protein GFI1 homolog pag-3 from Caenorhabditis elegans.